Here is a 760-residue protein sequence, read N- to C-terminus: Endoplasmin homolog (760 aa).

An N-terminal signal peptide occupies residues methionine 1–alanine 23. ATP-binding residues include asparagine 95, aspartate 137, asparagine 150, and phenylalanine 187. N-linked (GlcNAc...) asparagine glycosylation is present at asparagine 95. Residue asparagine 423 is glycosylated (N-linked (GlcNAc...) asparagine). The tract at residues serine 727–leucine 760 is disordered. Residues alanine 741–leucine 760 show a composition bias toward acidic residues. The Prevents secretion from ER motif lies at histidine 757–leucine 760.

The protein belongs to the heat shock protein 90 family.

The protein resides in the endoplasmic reticulum lumen. Its function is as follows. Molecular chaperone that functions in the processing and transport of secreted proteins. The chain is Endoplasmin homolog from Caenorhabditis elegans.